Consider the following 318-residue polypeptide: Ribosomal RNA small subunit methyltransferase H (318 aa).

Residues 37–39, Asp-56, Tyr-83, Asp-104, and Gln-111 contribute to the S-adenosyl-L-methionine site; that span reads GGH. The disordered stretch occupies residues 293 to 318; sequence EEEIAENRRAAPARLRGAQRIREDAE.

The protein belongs to the methyltransferase superfamily. RsmH family.

The protein resides in the cytoplasm. It catalyses the reaction cytidine(1402) in 16S rRNA + S-adenosyl-L-methionine = N(4)-methylcytidine(1402) in 16S rRNA + S-adenosyl-L-homocysteine + H(+). Specifically methylates the N4 position of cytidine in position 1402 (C1402) of 16S rRNA. The protein is Ribosomal RNA small subunit methyltransferase H of Streptomyces avermitilis (strain ATCC 31267 / DSM 46492 / JCM 5070 / NBRC 14893 / NCIMB 12804 / NRRL 8165 / MA-4680).